The following is a 597-amino-acid chain: Arginine--tRNA ligase (597 aa).

The 'HIGH' region motif lies at 125 to 135; that stretch reads PNTNKPLHLGH.

This sequence belongs to the class-I aminoacyl-tRNA synthetase family. As to quaternary structure, monomer.

It is found in the cytoplasm. It carries out the reaction tRNA(Arg) + L-arginine + ATP = L-arginyl-tRNA(Arg) + AMP + diphosphate. This Bacteroides thetaiotaomicron (strain ATCC 29148 / DSM 2079 / JCM 5827 / CCUG 10774 / NCTC 10582 / VPI-5482 / E50) protein is Arginine--tRNA ligase.